We begin with the raw amino-acid sequence, 664 residues long: 26S rRNA (cytosine-C(5))-methyltransferase nsun-1 (664 aa).

A disordered region spans residues 1–105 (MAIVKKKKVS…DDSDAGDHLP (105 aa)). The segment covering 38-52 (PKKKKLVKKVKKSAK) has biased composition (basic residues). Over residues 53–68 (KAHEEEPIEQVEKLQL) the composition is skewed to basic and acidic residues. Residues 84–99 (SDDEDLRDDYSDDDSD) are compositionally biased toward acidic residues. Residues 313–319 (CSAPGGK), aspartate 337, and aspartate 382 each bind S-adenosyl-L-methionine. Cysteine 439 serves as the catalytic Nucleophile. The tract at residues 513-664 (KMSKQGVMEK…RRKKMLAKQQ (152 aa)) is disordered. Over residues 519-528 (VMEKEKEKAA) the composition is skewed to basic and acidic residues. Over residues 541 to 550 (EASESSDDEE) the composition is skewed to acidic residues. The span at 563-572 (KPAKKQQQKK) shows a compositional bias: basic residues. The segment covering 606 to 618 (KAAEKQAAVKEDD) has biased composition (basic and acidic residues). 2 stretches are compositionally biased toward basic residues: residues 627–644 (KRAK…KRAA) and 652–664 (VKNR…AKQQ).

Belongs to the class I-like SAM-binding methyltransferase superfamily. RsmB/NOP family.

Its subcellular location is the nucleus. The protein resides in the nucleolus. It catalyses the reaction a cytidine in 26S rRNA + S-adenosyl-L-methionine = a 5-methylcytidine in 26S rRNA + S-adenosyl-L-homocysteine + H(+). In terms of biological role, methyltransferase which methylates the carbon-5 position of cytosine 2982 to 5-methylcytosine (m5C2982) in 26S rRNA. May play a role in the translation of leucine and proline codons. May be required for the translation of specific mRNAs such as mRNAs involved in gonad development, collagen production and cuticle integrity. Plays a role in ensuring the correct localization of the germline-specific protein gld-1 during development. Not required for pre-rRNA processing, the production of mature 5S, 5.8S, 18S or 26S rRNAs or global translation. Plays a role in positively regulating fertility. The protein is 26S rRNA (cytosine-C(5))-methyltransferase nsun-1 of Caenorhabditis elegans.